We begin with the raw amino-acid sequence, 317 residues long: Tyrosine--tRNA ligase (317 aa).

Tyr-33 contacts L-tyrosine. The short motif at 38–46 (PSGKIHMGH) is the 'HIGH' region element. 4 residues coordinate L-tyrosine: Tyr-155, Gln-159, Asp-162, and Gln-177. The 'KMSKS' region signature appears at 211 to 215 (KMASS). Position 214 (Ser-214) interacts with ATP.

It belongs to the class-I aminoacyl-tRNA synthetase family. TyrS type 3 subfamily. In terms of assembly, homodimer.

It is found in the cytoplasm. The enzyme catalyses tRNA(Tyr) + L-tyrosine + ATP = L-tyrosyl-tRNA(Tyr) + AMP + diphosphate + H(+). Its function is as follows. Catalyzes the attachment of tyrosine to tRNA(Tyr) in a two-step reaction: tyrosine is first activated by ATP to form Tyr-AMP and then transferred to the acceptor end of tRNA(Tyr). This is Tyrosine--tRNA ligase from Methanosarcina barkeri (strain Fusaro / DSM 804).